The chain runs to 762 residues: uncharacterized protein (762 aa).

The tract at residues 734–762 (QQRPRVAAAAPPPPPQPPAAAVPTTQAST) is disordered. Residues 743 to 753 (APPPPPQPPAA) are compositionally biased toward pro residues.

This is an uncharacterized protein from Ostreid herpesvirus 1 (isolate France) (OsHV-1).